The primary structure comprises 141 residues: Large ribosomal subunit protein uL11 (141 aa).

It belongs to the universal ribosomal protein uL11 family. As to quaternary structure, part of the ribosomal stalk of the 50S ribosomal subunit. Interacts with L10 and the large rRNA to form the base of the stalk. L10 forms an elongated spine to which L12 dimers bind in a sequential fashion forming a multimeric L10(L12)X complex. In terms of processing, one or more lysine residues are methylated.

Its function is as follows. Forms part of the ribosomal stalk which helps the ribosome interact with GTP-bound translation factors. This is Large ribosomal subunit protein uL11 from Trichodesmium erythraeum (strain IMS101).